The sequence spans 671 residues: MQGPPRSLRAGLSLDDFIPGHLQSHIGSSSRGTRVPVIRNGGSNTLNFQFHDPAPRTVCNGGYTPRRDASQHPDPAWYQTWPGPGSKPSASTKIPASQHTQNWSATWTKDSKRRDKRWVKYEGIGPVDESGMPIAPRSSVDRPRDWYRRMFQQIHRKMPDLQLDWTFEEPPRDPRHLGAQQRPAHRPGPATSSSGRSWDHSEELPRSTFNYRPGAFSTVLQPSNQVLRRREKVDNVWTEESWNQFLQELETGQRPKKPLVDDPGEKPSQPIEVLLERELAELSAELDKDLRAIETRLPSPKSSPAPRRAPEQRPPAGPASAWSSSYPHAPYLGSARSLSPHKMADGGSPFLGRRDFVYPSSTRDPSASNGGGSPARREEKKRKAARLKFDFQAQSPKELTLQKGDIVYIHKEVDKNWLEGEHHGRLGIFPANYVEVLPADEIPKPIKPPTYQVLEYGEAVAQYTFKGDLEVELSFRKGEHICLIRKVNENWYEGRITGTGRQGIFPASYVQVSREPRLRLCDDGPQLPTSPRLTAAARSARHPSSPSALRSPADPIDLGGQTSPRRTGFSFPTQEPRPQTQNLGTPGPALSHSRGPSHPLDLGTSSPNTSQIHWTPYRAMYQYRPQNEDELELREGDRVDVMQQCDDGWFVGVSRRTQKFGTFPGNYVAPV.

At Gln-2 the chain carries N-acetylalanine. Phosphoserine is present on Arg-6. 5 disordered regions span residues 46–111 (LNFQ…TKDS), 166–215 (TFEE…RPGA), 249–268 (LETG…EKPS), 295–324 (TRLP…AWSS), and 337–383 (SLSP…KKRK). Positions 88–108 (PSASTKIPASQHTQNWSATWT) are enriched in polar residues. The 73-residue stretch at 115-187 (DKRWVKYEGI…GAQQRPAHRP (73 aa)) folds into the SoHo domain. At Ser-348 the chain carries Phosphoserine. Polar residues predominate over residues 359 to 368 (PSSTRDPSAS). SH3 domains lie at 380–439 (KKRK…VLPA) and 454–515 (LEYG…VSRE). The interval 380 to 515 (KKRKAARLKF…PASYVQVSRE (136 aa)) is binds to vinculin. The residue at position 395 (Ser-395) is a Phosphoserine. The tract at residues 519-611 (RLCDDGPQLP…LGTSSPNTSQ (93 aa)) is disordered. Ser-530 is modified (phosphoserine; by MAPK1). Residues 535 to 553 (AAARSARHPSSPSALRSPA) show a composition bias toward low complexity. Phosphoserine occurs at positions 544, 545, 547, 551, and 563. The segment covering 560-584 (GQTSPRRTGFSFPTQEPRPQTQNLG) has biased composition (polar residues). The SH3 3 domain occupies 612–671 (IHWTPYRAMYQYRPQNEDELELREGDRVDVMQQCDDGWFVGVSRRTQKFGTFPGNYVAPV). A binds to SOS region spans residues 612–671 (IHWTPYRAMYQYRPQNEDELELREGDRVDVMQQCDDGWFVGVSRRTQKFGTFPGNYVAPV).

As to quaternary structure, interacts with DLG5 through its third SH3 domain. Interacts with vinculin by the first two SH3 domains and the proline rich region of vinculin. Binds to SOS (guanine nucleotide exchange factor of RAS and RAC), through its third SH3 domain. The formation of this complex is down-regulated by phosphorylation of SOS. Interacts with INPPL1/SHIP2, SAFB2, SOCS7 and SRCIN1. Interacts with FASLG. Interacts with MAPK1/ERK2. Post-translationally, phosphorylated at Ser-530 by MAPK1/ERK2 during cell spreading. Both isoforms are expressed in different tissues like heart, placenta, brain, skeletal muscle and pancreas. Isoform beta is especially found in liver.

Its subcellular location is the cell junction. The protein localises to the cytoplasm. It is found in the cytoskeleton. The protein resides in the nucleus. Functionally, vinexin alpha isoform promotes up-regulation of actin stress fiber formation. Vinexin beta isoform plays a role in cell spreading and enhances the activation of JNK/SAPK in response to EGF stimulation by using its third SH3 domain. The protein is Vinexin (SORBS3) of Homo sapiens (Human).